The following is a 546-amino-acid chain: Apolipoprotein N-acyltransferase 1 (546 aa).

Helical transmembrane passes span 14 to 34 (FLLF…PLLP), 41 to 61 (AYGA…FAVV), 62 to 82 (FWGG…LFVF), 85 to 105 (VALC…CLAL), 122 to 142 (LVWL…PYGV), 151 to 171 (LPLI…LVVF), and 194 to 214 (FLSA…LCGF). Positions 233–502 (AKVALVQPNG…PGVLVADVPI (270 aa)) constitute a CN hydrolase domain. The active-site Proton acceptor is the Glu280. Lys361 is an active-site residue. Cys413 functions as the Nucleophile in the catalytic mechanism. Residues 514-534 (GDALGVFFCVASLFILIAGGV) form a helical membrane-spanning segment.

It belongs to the CN hydrolase family. Apolipoprotein N-acyltransferase subfamily.

It is found in the cell inner membrane. The catalysed reaction is N-terminal S-1,2-diacyl-sn-glyceryl-L-cysteinyl-[lipoprotein] + a glycerophospholipid = N-acyl-S-1,2-diacyl-sn-glyceryl-L-cysteinyl-[lipoprotein] + a 2-acyl-sn-glycero-3-phospholipid + H(+). It participates in protein modification; lipoprotein biosynthesis (N-acyl transfer). Its function is as follows. Catalyzes the phospholipid dependent N-acylation of the N-terminal cysteine of apolipoprotein, the last step in lipoprotein maturation. The polypeptide is Apolipoprotein N-acyltransferase 1 (Treponema pallidum (strain Nichols)).